Consider the following 422-residue polypeptide: MATFALPFCEIPEDLQLRILSLLTPAEISSFACTSKRFASLCQEDGKIWHVMCDQRWGKKTKIQKWANGQIPYRHLYKTLKGLENLIGFWRLCGRANPAASSPPLVFFDWGSSFILGSRVLSTGDDTYEVKKTPFLLMGISPEGRSENFLDLVGGNLRSVDDDLKELEASNNLVSVDVNFMGNGHIMVEENRCFTNNNRREDQRSSGDESDDLISSPNFSEMYTQLANKTSPGGDRRRQKRKEKERQASRTKWEPEHFLKVADCSPTPTRPLQGLWKGFCEGSIELYLVKYDEVGGIICRKVEDLSLSRYTPPVFWTPKHTFIRSPFSAEEELLLNSRIHISPFAEVHENVVSGMLYMKSSCDLVLPGEPGNGIGFLRGEGRVWLYDNGTFGFGFLRDQFIIDLKRVALEDGCLADEVEACM.

Residues 5–52 enclose the F-box domain; it reads ALPFCEIPEDLQLRILSLLTPAEISSFACTSKRFASLCQEDGKIWHVM. 2 stretches are compositionally biased toward basic and acidic residues: residues 197 to 207 and 242 to 252; these read NNRREDQRSSG and KEKERQASRTK. Disordered regions lie at residues 197–216 and 226–252; these read NNRR…LISS and LANK…SRTK.

The chain is F-box protein At3g12350 from Arabidopsis thaliana (Mouse-ear cress).